A 315-amino-acid polypeptide reads, in one-letter code: MPRIAYLGPQGTFTESALLQMISGAMVPGGDADDTAVTPVPTDSTPAGLEAVRSGAADYACVPIENSIEGSVLPTLDSLAVGAPLQIFAELTLAVSFSIVVRPDHDGDVATVAAFPVAAAQVRRWLAEHLPAAQLVPAHSNAAAAADVAGGRADAGISTALAAERYGLRSLAAGVVDEPNARTRFVLVGRPAPPPARTGADRTSVALRLPNTPGALVAAMTELSIRDIDLTRIESRPTRTELGTYVFFLDCVGHLEDDAVAEALKALHRRCEDVRYLGSWPTGTAAGAPPPSSDEATRWLTRLREGLPTPPEGGR.

Positions 3–190 constitute a Prephenate dehydratase domain; sequence RIAYLGPQGT…ARTRFVLVGR (188 aa). The ACT domain maps to 204-281; it reads SVALRLPNTP…EDVRYLGSWP (78 aa).

In terms of assembly, homodimer.

The enzyme catalyses prephenate + H(+) = 3-phenylpyruvate + CO2 + H2O. The protein operates within amino-acid biosynthesis; L-phenylalanine biosynthesis; phenylpyruvate from prephenate: step 1/1. This is Prephenate dehydratase (pheA) from Mycobacterium sp. (strain JLS).